The sequence spans 359 residues: 4-hydroxy-2-oxovalerate aldolase 1 (359 aa).

A Pyruvate carboxyltransferase domain is found at 23 to 275; sequence VRVTDTSLRD…KTGIDFFDIA (253 aa). 31–32 lines the substrate pocket; sequence RD. Aspartate 32 contacts Mn(2+). The active-site Proton acceptor is histidine 35. Residues serine 185 and histidine 214 each contribute to the substrate site. Residues histidine 214 and histidine 216 each coordinate Mn(2+). A substrate-binding site is contributed by tyrosine 305.

The protein belongs to the 4-hydroxy-2-oxovalerate aldolase family.

It carries out the reaction (S)-4-hydroxy-2-oxopentanoate = acetaldehyde + pyruvate. The polypeptide is 4-hydroxy-2-oxovalerate aldolase 1 (Mycobacteroides abscessus (strain ATCC 19977 / DSM 44196 / CCUG 20993 / CIP 104536 / JCM 13569 / NCTC 13031 / TMC 1543 / L948) (Mycobacterium abscessus)).